Consider the following 1337-residue polypeptide: Rho GTPase-activating protein 29 (1337 aa).

Residues 1 to 13 (MFRQGSNSGNKRM) are compositionally biased toward polar residues. Disordered stretches follow at residues 1-20 (MFRQ…ARLS), 369-397 (REEY…LEKK), 513-551 (SSKT…ADEV), and 564-654 (ERRS…TGLS). Residues 225–488 (EQVDLLLLKN…QAKKYEPGQR (264 aa)) enclose the F-BAR domain. A coiled-coil region spans residues 326–443 (LLARKNDLDK…SEILAQIRKL (118 aa)). Residues 369 to 384 (REEYEKARSSTSRTEE) show a composition bias toward basic and acidic residues. Polar residues-rich tracts occupy residues 525-545 (QNST…SMDN) and 568-579 (NSSIDMQVPRTQ). Over residues 596 to 613 (CSDSESAGGSSESRSMDS) the composition is skewed to low complexity. The segment at 676-723 (AHTHKLRKLRAPSKCRECDSLVVFHGAECEECSLACHKKCLETLAIQC) adopts a Phorbol-ester/DAG-type zinc-finger fold. The Rho-GAP domain maps to 737–950 (IDFAQVVKNS…LLIKHHQMIF (214 aa)). A compositionally biased stretch (polar residues) spans 960 to 973 (TSPTVSQASFGSSI). Disordered regions lie at residues 960–983 (TSPT…LSRH), 1016–1066 (MKTG…AKPV), 1083–1114 (SRNT…TNFY), 1149–1210 (PPSG…KPSD), and 1273–1337 (TVSR…AHFV). Positions 974-983 (QDKESKLSRH) are enriched in basic and acidic residues. Residues 1083–1092 (SRNTVEHDHS) show a composition bias toward basic and acidic residues. 2 stretches are compositionally biased toward polar residues: residues 1161 to 1177 (MASQ…SQSG) and 1295 to 1310 (VTLS…TEEL). The segment covering 1325–1337 (RMQELEHREAHFV) has biased composition (basic and acidic residues).

GTPase activator for the Rho-type GTPases by converting them to an inactive GDP-bound state. Has strong activity toward RHOA, and weaker activity toward RAC1 and CDC42. The protein is Rho GTPase-activating protein 29 (arhgap29) of Danio rerio (Zebrafish).